We begin with the raw amino-acid sequence, 88 residues long: Translation initiation factor IF-1 3 (88 aa).

In terms of domain architecture, S1-like spans methionine 1 to lysine 72.

This sequence belongs to the IF-1 family. In terms of assembly, component of the 30S ribosomal translation pre-initiation complex which assembles on the 30S ribosome in the order IF-2 and IF-3, IF-1 and N-formylmethionyl-tRNA(fMet); mRNA recruitment can occur at any time during PIC assembly.

Its subcellular location is the cytoplasm. Functionally, one of the essential components for the initiation of protein synthesis. Stabilizes the binding of IF-2 and IF-3 on the 30S subunit to which N-formylmethionyl-tRNA(fMet) subsequently binds. Helps modulate mRNA selection, yielding the 30S pre-initiation complex (PIC). Upon addition of the 50S ribosomal subunit IF-1, IF-2 and IF-3 are released leaving the mature 70S translation initiation complex. The polypeptide is Translation initiation factor IF-1 3 (Burkholderia orbicola (strain AU 1054)).